Consider the following 1241-residue polypeptide: ATP-dependent helicase/nuclease subunit A (1241 aa).

The region spanning 12–485 is the UvrD-like helicase ATP-binding domain; sequence SQWTDDQWKA…IDLAKNFRSR (474 aa). Residue 33–40 coordinates ATP; the sequence is AAAGSGKT. The 301-residue stretch at 505–805 folds into the UvrD-like helicase C-terminal domain; that stretch reads GEIDYDADAE…RIMTIHKSKG (301 aa).

Belongs to the helicase family. AddA subfamily. In terms of assembly, heterodimer of AddA and AddB/RexB. Requires Mg(2+) as cofactor.

It catalyses the reaction Couples ATP hydrolysis with the unwinding of duplex DNA by translocating in the 3'-5' direction.. The catalysed reaction is ATP + H2O = ADP + phosphate + H(+). In terms of biological role, the heterodimer acts as both an ATP-dependent DNA helicase and an ATP-dependent, dual-direction single-stranded exonuclease. Recognizes the chi site generating a DNA molecule suitable for the initiation of homologous recombination. The AddA nuclease domain is required for chi fragment generation; this subunit has the helicase and 3' -&gt; 5' nuclease activities. This is ATP-dependent helicase/nuclease subunit A from Bacillus thuringiensis (strain Al Hakam).